The chain runs to 191 residues: Adenylate kinase (191 aa).

Residue 12–17 (GSGKTT) coordinates ATP. The interval 34–63 (STGDLLRAESAKKTERGLLIEKFTSQGELV) is NMP. AMP is bound by residues Thr35, Arg40, 61 to 63 (ELV), 88 to 91 (GYPR), and Gln95. The segment at 130–136 (GRSRGAD) is LID. Arg131 contributes to the ATP binding site. Arg133 and Arg145 together coordinate AMP. Arg173 is a binding site for ATP.

It belongs to the adenylate kinase family. Monomer.

It localises to the cytoplasm. It catalyses the reaction AMP + ATP = 2 ADP. It functions in the pathway purine metabolism; AMP biosynthesis via salvage pathway; AMP from ADP: step 1/1. Catalyzes the reversible transfer of the terminal phosphate group between ATP and AMP. Plays an important role in cellular energy homeostasis and in adenine nucleotide metabolism. This chain is Adenylate kinase, found in Helicobacter pylori (strain ATCC 700392 / 26695) (Campylobacter pylori).